Reading from the N-terminus, the 322-residue chain is Pre-mRNA-splicing factor NTR2 (322 aa).

The disordered stretch occupies residues 1–30 (MAIKKRNKIRLPSGSPEEVGIDGSAHKPMQ). Serine 40 is modified (phosphoserine). The interval 113–137 (LLSDSSEAGSSSEGEHISSIPTRGE) is disordered. A compositionally biased stretch (low complexity) spans 115–132 (SDSSEAGSSSEGEHISSI). A phosphoserine mark is found at serine 153 and serine 197.

In terms of assembly, component of the NTR complex (NTC-related complex), composed of NTR1, NTR2 and PRP43. Interacts with CLF1, NTR1 and PRP43.

The protein localises to the cytoplasm. The protein resides in the nucleus. Functionally, involved in pre-mRNA splicing and spliceosome disassembly. Promotes release of excised lariat intron from the spliceosome by acting as a receptor for PRP43. This targeting of PRP43 leads to disassembly of the spliceosome with the separation of the U2, U5, U6 snRNPs and the NTC complex. This Saccharomyces cerevisiae (strain ATCC 204508 / S288c) (Baker's yeast) protein is Pre-mRNA-splicing factor NTR2 (NTR2).